The following is a 62-amino-acid chain: Photosystem II reaction center protein Z (62 aa).

Transmembrane regions (helical) follow at residues 8–28 (TLFAFVGLSFLLVVGVPVVFA) and 41–61 (FSGIGFWFLLVFAVGILNSFV).

The protein belongs to the PsbZ family. As to quaternary structure, PSII is composed of 1 copy each of membrane proteins PsbA, PsbB, PsbC, PsbD, PsbE, PsbF, PsbH, PsbI, PsbJ, PsbK, PsbL, PsbM, PsbT, PsbY, PsbZ, Psb30/Ycf12, at least 3 peripheral proteins of the oxygen-evolving complex and a large number of cofactors. It forms dimeric complexes.

The protein resides in the plastid. Its subcellular location is the chloroplast thylakoid membrane. In terms of biological role, may control the interaction of photosystem II (PSII) cores with the light-harvesting antenna, regulates electron flow through the 2 photosystem reaction centers. PSII is a light-driven water plastoquinone oxidoreductase, using light energy to abstract electrons from H(2)O, generating a proton gradient subsequently used for ATP formation. The sequence is that of Photosystem II reaction center protein Z from Tupiella akineta (Green alga).